Here is a 227-residue protein sequence, read N- to C-terminus: Cytochrome c oxidase subunit 2 (227 aa).

Over 1–14 the chain is Mitochondrial intermembrane; the sequence is MAYPFQLGLQDATS. Residues 15–45 form a helical membrane-spanning segment; sequence PIMEELLHFHDHTLMIVFLISSLVLYIISLM. Residues 46-59 lie on the Mitochondrial matrix side of the membrane; that stretch reads LTTKLTHTSTMDAQ. A helical transmembrane segment spans residues 60 to 87; sequence EVETVWTILPAIILILIALPSLRILYMM. The Mitochondrial intermembrane segment spans residues 88–227; the sequence is DEINNPSLTV…YFETWSAVMV (140 aa). The Cu cation site is built by H161, C196, E198, C200, H204, and M207. Position 198 (E198) interacts with Mg(2+). At Y218 the chain carries Phosphotyrosine.

This sequence belongs to the cytochrome c oxidase subunit 2 family. As to quaternary structure, component of the cytochrome c oxidase (complex IV, CIV), a multisubunit enzyme composed of 14 subunits. The complex is composed of a catalytic core of 3 subunits MT-CO1, MT-CO2 and MT-CO3, encoded in the mitochondrial DNA, and 11 supernumerary subunits COX4I, COX5A, COX5B, COX6A, COX6B, COX6C, COX7A, COX7B, COX7C, COX8 and NDUFA4, which are encoded in the nuclear genome. The complex exists as a monomer or a dimer and forms supercomplexes (SCs) in the inner mitochondrial membrane with NADH-ubiquinone oxidoreductase (complex I, CI) and ubiquinol-cytochrome c oxidoreductase (cytochrome b-c1 complex, complex III, CIII), resulting in different assemblies (supercomplex SCI(1)III(2)IV(1) and megacomplex MCI(2)III(2)IV(2)). Found in a complex with TMEM177, COA6, COX18, COX20, SCO1 and SCO2. Interacts with TMEM177 in a COX20-dependent manner. Interacts with COX20. Interacts with COX16. Requires Cu cation as cofactor.

It is found in the mitochondrion inner membrane. The catalysed reaction is 4 Fe(II)-[cytochrome c] + O2 + 8 H(+)(in) = 4 Fe(III)-[cytochrome c] + 2 H2O + 4 H(+)(out). Functionally, component of the cytochrome c oxidase, the last enzyme in the mitochondrial electron transport chain which drives oxidative phosphorylation. The respiratory chain contains 3 multisubunit complexes succinate dehydrogenase (complex II, CII), ubiquinol-cytochrome c oxidoreductase (cytochrome b-c1 complex, complex III, CIII) and cytochrome c oxidase (complex IV, CIV), that cooperate to transfer electrons derived from NADH and succinate to molecular oxygen, creating an electrochemical gradient over the inner membrane that drives transmembrane transport and the ATP synthase. Cytochrome c oxidase is the component of the respiratory chain that catalyzes the reduction of oxygen to water. Electrons originating from reduced cytochrome c in the intermembrane space (IMS) are transferred via the dinuclear copper A center (CU(A)) of subunit 2 and heme A of subunit 1 to the active site in subunit 1, a binuclear center (BNC) formed by heme A3 and copper B (CU(B)). The BNC reduces molecular oxygen to 2 water molecules using 4 electrons from cytochrome c in the IMS and 4 protons from the mitochondrial matrix. In Lycalopex sechurae (Sechuran desert fox), this protein is Cytochrome c oxidase subunit 2 (MT-CO2).